Here is a 227-residue protein sequence, read N- to C-terminus: Nodulation protein W (227 aa).

Residues 21-135 (IVFVVEDDIS…ELLDAVVAAT (115 aa)) enclose the Response regulatory domain. 4-aspartylphosphate is present on Asp70. The 66-residue stretch at 151–216 (LKSLFETLSP…DLIRMSETLG (66 aa)) folds into the HTH luxR-type domain. Positions 175–194 (NKQVAAELGLAEITVKIYRG) form a DNA-binding region, H-T-H motif.

In terms of processing, phosphorylated by NodV.

It localises to the cytoplasm. In terms of biological role, member of the two-component regulatory system NodV/NodW probably involved in the regulation of the transcription of genes involved in the nodulation process. The chain is Nodulation protein W (nodW) from Bradyrhizobium diazoefficiens (strain JCM 10833 / BCRC 13528 / IAM 13628 / NBRC 14792 / USDA 110).